The following is a 177-amino-acid chain: Ureidoglycolate lyase (177 aa).

The protein belongs to the ureidoglycolate lyase family. Homodimer. The cofactor is Ni(2+).

It catalyses the reaction (S)-ureidoglycolate = urea + glyoxylate. It participates in nitrogen metabolism; (S)-allantoin degradation. Functionally, catalyzes the catabolism of the allantoin degradation intermediate (S)-ureidoglycolate, generating urea and glyoxylate. Involved in the utilization of allantoin as nitrogen source. The polypeptide is Ureidoglycolate lyase (Burkholderia cepacia (Pseudomonas cepacia)).